The following is an 836-amino-acid chain: Transcription factor vrtR2 (836 aa).

The segment covering 1-26 (MPSLSSKTSTMQRSCRPQMSACPNQQ) has biased composition (polar residues). Residues 1–29 (MPSLSSKTSTMQRSCRPQMSACPNQQQKD) are disordered. The segment at residues 37–63 (CVLCRDRKLKCDKLDPCSNCTSSGVAC) is a DNA-binding region (zn(2)-C6 fungal-type). The tract at residues 72–114 (PRGRHARTVQTKASTPPDTRRRGSSNESTTAPAPDDGGLGTHI) is disordered. Residues 79 to 88 (TVQTKASTPP) show a composition bias toward polar residues.

The protein resides in the nucleus. In terms of biological role, probable transcription factor that regulates expression of the gene cluster that mediates the biosynthesis of viridicatumtoxin, a tetracycline-like fungal meroterpenoid with a unique, fused spirobicyclic ring system. The chain is Transcription factor vrtR2 from Penicillium aethiopicum.